The sequence spans 238 residues: 2,3,4,5-tetrahydropyridine-2,6-dicarboxylate N-acetyltransferase (238 aa).

Belongs to the transferase hexapeptide repeat family. DapH subfamily.

It carries out the reaction (S)-2,3,4,5-tetrahydrodipicolinate + acetyl-CoA + H2O = L-2-acetamido-6-oxoheptanedioate + CoA. The protein operates within amino-acid biosynthesis; L-lysine biosynthesis via DAP pathway; LL-2,6-diaminopimelate from (S)-tetrahydrodipicolinate (acetylase route): step 1/3. Its function is as follows. Catalyzes the transfer of an acetyl group from acetyl-CoA to tetrahydrodipicolinate. The chain is 2,3,4,5-tetrahydropyridine-2,6-dicarboxylate N-acetyltransferase from Thermotoga neapolitana (strain ATCC 49049 / DSM 4359 / NBRC 107923 / NS-E).